The sequence spans 179 residues: Large ribosomal subunit protein uL6 (179 aa).

The protein belongs to the universal ribosomal protein uL6 family. Part of the 50S ribosomal subunit.

Functionally, this protein binds to the 23S rRNA, and is important in its secondary structure. It is located near the subunit interface in the base of the L7/L12 stalk, and near the tRNA binding site of the peptidyltransferase center. This chain is Large ribosomal subunit protein uL6, found in Legionella pneumophila (strain Paris).